The sequence spans 469 residues: 3-isopropylmalate dehydratase large subunit (469 aa).

[4Fe-4S] cluster-binding residues include C349, C409, and C412.

It belongs to the aconitase/IPM isomerase family. LeuC type 1 subfamily. Heterodimer of LeuC and LeuD. [4Fe-4S] cluster serves as cofactor.

It carries out the reaction (2R,3S)-3-isopropylmalate = (2S)-2-isopropylmalate. The protein operates within amino-acid biosynthesis; L-leucine biosynthesis; L-leucine from 3-methyl-2-oxobutanoate: step 2/4. Catalyzes the isomerization between 2-isopropylmalate and 3-isopropylmalate, via the formation of 2-isopropylmaleate. This chain is 3-isopropylmalate dehydratase large subunit, found in Methylorubrum extorquens (strain CM4 / NCIMB 13688) (Methylobacterium extorquens).